A 132-amino-acid chain; its full sequence is Small ribosomal subunit protein uS8 (132 aa).

It belongs to the universal ribosomal protein uS8 family. In terms of assembly, part of the 30S ribosomal subunit. Contacts proteins S5 and S12.

Its function is as follows. One of the primary rRNA binding proteins, it binds directly to 16S rRNA central domain where it helps coordinate assembly of the platform of the 30S subunit. The polypeptide is Small ribosomal subunit protein uS8 (Alkaliphilus metalliredigens (strain QYMF)).